The following is a 219-amino-acid chain: tRNA (guanine-N(7)-)-methyltransferase (219 aa).

Positions 46, 71, 100, and 122 each coordinate S-adenosyl-L-methionine. Aspartate 122 is a catalytic residue. Substrate-binding positions include lysine 126, aspartate 158, and 199–202 (TEYE).

Belongs to the class I-like SAM-binding methyltransferase superfamily. TrmB family.

The enzyme catalyses guanosine(46) in tRNA + S-adenosyl-L-methionine = N(7)-methylguanosine(46) in tRNA + S-adenosyl-L-homocysteine. It participates in tRNA modification; N(7)-methylguanine-tRNA biosynthesis. Catalyzes the formation of N(7)-methylguanine at position 46 (m7G46) in tRNA. This chain is tRNA (guanine-N(7)-)-methyltransferase, found in Leuconostoc mesenteroides subsp. mesenteroides (strain ATCC 8293 / DSM 20343 / BCRC 11652 / CCM 1803 / JCM 6124 / NCDO 523 / NBRC 100496 / NCIMB 8023 / NCTC 12954 / NRRL B-1118 / 37Y).